Consider the following 230-residue polypeptide: Antiholin-like protein LrgB (230 aa).

Helical transmembrane passes span 5–25, 30–50, 61–81, 92–112, 149–169, 177–197, and 209–229; these read MTPYFGIVVSLIAYGIGTLLF, GFFLFTPLFVAMVLGIVFLKV, GGKMISFFLEPATIAFAIPLY, WQILSAIVVGSICSVIVVFIV, ITSFAVIFNAVIVYALGALFL, PIAKGLALGTAGHALGVAVGI, and IAVTVVGVVTVVVIPMFMPFI.

It belongs to the CidB/LrgB family. LrgB subfamily.

It is found in the cell membrane. Inhibits the expression or activity of extracellular murein hydrolases by interacting, possibly with LrgA, with the holin-like protein CidA. The LrgAB and CidA proteins may affect the proton motive force of the membrane. May be involved in programmed cell death (PCD), possibly triggering PCD in response to antibiotics and environmental stresses. The protein is Antiholin-like protein LrgB of Bacillus cereus (strain Q1).